We begin with the raw amino-acid sequence, 66 residues long: Large ribosomal subunit protein bL35 (66 aa).

Basic residues-rich tracts occupy residues Met1–Lys15 and Ile22–Arg43. Residues Met1–Arg43 form a disordered region.

This sequence belongs to the bacterial ribosomal protein bL35 family.

The polypeptide is Large ribosomal subunit protein bL35 (Dictyoglomus turgidum (strain DSM 6724 / Z-1310)).